The primary structure comprises 579 residues: Nif-specific regulatory protein (579 aa).

The GAF domain maps to 40-187 (DPVAEVPQIF…MVASLLEQAL (148 aa)). Residues 226–454 (IVGSSPAIAE…LENCVNRAAA (229 aa)) enclose the Sigma-54 factor interaction domain. ATP contacts are provided by residues 254–261 (GESGTGKE) and 317–326 (ADGGTLFLDE). An inter-domain linker region spans residues 464–536 (EELACRQGAC…PLRTKTAQLS (73 aa)). Positions 468 and 473 each coordinate a divalent metal cation. The disordered stretch occupies residues 502-529 (RVSAPPPEPAPAPEPAPEAPPREEVPLR). 7 repeat units span residues 505–506 (AP), 507–508 (PP), 509–510 (EP), 511–512 (AP), 513–514 (AP), 515–516 (EP), and 517–518 (AP). Residues 505–518 (APPPEPAPAPEPAP) form a 7 X 2 AA tandem repeats of X-P region. Residues 505–520 (APPPEPAPAPEPAPEA) show a composition bias toward pro residues. The segment at 537 to 579 (REELLRALESAGWVQAKAARLLGMTPRQIAYALQKFEIELRKI) is C-terminal DNA-binding domain. Residues 551-570 (QAKAARLLGMTPRQIAYALQ) constitute a DNA-binding region (H-T-H motif).

As to quaternary structure, interacts with sigma-54.

Its function is as follows. Required for activation of most nif operons, which are directly involved in nitrogen fixation. The protein is Nif-specific regulatory protein (nifA1) of Rhodobacter capsulatus (Rhodopseudomonas capsulata).